Consider the following 173-residue polypeptide: RNA pyrophosphohydrolase (173 aa).

The 154-residue stretch at 13 to 166 (PYRPCVGLMI…KRKVYEEVVA (154 aa)) folds into the Nudix hydrolase domain. The Nudix box signature appears at 54–75 (GGIDKGEEPLQAAERELYEETG).

The protein belongs to the Nudix hydrolase family. RppH subfamily. Requires a divalent metal cation as cofactor.

In terms of biological role, accelerates the degradation of transcripts by removing pyrophosphate from the 5'-end of triphosphorylated RNA, leading to a more labile monophosphorylated state that can stimulate subsequent ribonuclease cleavage. This Mesorhizobium japonicum (strain LMG 29417 / CECT 9101 / MAFF 303099) (Mesorhizobium loti (strain MAFF 303099)) protein is RNA pyrophosphohydrolase.